The chain runs to 479 residues: Variant surface glycoprotein ILTAT 1.22 (479 aa).

An N-terminal signal peptide occupies residues 1–12 (MDTAQVFALFYM). 2 N-linked (GlcNAc...) asparagine glycosylation sites follow: asparagine 120 and asparagine 458. The GPI-anchor amidated asparagine moiety is linked to residue asparagine 462. A propeptide spans 463-479 (NSFAIKTSTLLLAVLLF) (removed in mature form).

The protein resides in the cell membrane. Its function is as follows. VSG forms a coat on the surface of the parasite. The trypanosome evades the immune response of the host by expressing a series of antigenically distinct VSGs from an estimated 1000 VSG genes. This is Variant surface glycoprotein ILTAT 1.22 from Trypanosoma brucei brucei.